Here is a 299-residue protein sequence, read N- to C-terminus: tRNA(Met) cytidine acetate ligase (299 aa).

ATP is bound by residues 6 to 19 (IAEY…HIYM), glycine 100, asparagine 157, and arginine 182.

This sequence belongs to the TmcAL family.

The protein resides in the cytoplasm. It catalyses the reaction cytidine(34) in elongator tRNA(Met) + acetate + ATP = N(4)-acetylcytidine(34) in elongator tRNA(Met) + AMP + diphosphate. Its function is as follows. Catalyzes the formation of N(4)-acetylcytidine (ac(4)C) at the wobble position of elongator tRNA(Met), using acetate and ATP as substrates. First activates an acetate ion to form acetyladenylate (Ac-AMP) and then transfers the acetyl group to tRNA to form ac(4)C34. The protein is tRNA(Met) cytidine acetate ligase of Mycoplasma mobile (strain ATCC 43663 / 163K / NCTC 11711) (Mesomycoplasma mobile).